A 140-amino-acid polypeptide reads, in one-letter code: Non-specific lipid transfer protein GPI-anchored 33 (140 aa).

The N-terminal stretch at 1–27 (MAYTNKVTISAAVATMMLFLAVTIVDA) is a signal peptide. 4 disulfide bridges follow: C40/C80, C52/C64, C65/C104, and C78/C112. Residue N91 is glycosylated (N-linked (GlcNAc...) asparagine). Residue G115 is the site of GPI-anchor amidated glycine attachment. Residues 116-140 (DASGGSTNKIAASMVLLGLVASLFF) constitute a propeptide, removed in mature form.

The protein belongs to the plant LTP family.

The protein resides in the cell membrane. Functionally, probable lipid transfer protein. This Arabidopsis thaliana (Mouse-ear cress) protein is Non-specific lipid transfer protein GPI-anchored 33.